Here is a 143-residue protein sequence, read N- to C-terminus: Meiotically up-regulated gene 128 protein (143 aa).

Functionally, has a role in meiosis. This Schizosaccharomyces pombe (strain 972 / ATCC 24843) (Fission yeast) protein is Meiotically up-regulated gene 128 protein (mug128).